The chain runs to 595 residues: Probable Xaa-Pro aminopeptidase CHGG_02942 (595 aa).

The tract at residues 51–76 is disordered; it reads KSGPSSSNLSPSTLSTEKTSSDSSGV. Low complexity predominate over residues 52–66; that stretch reads SGPSSSNLSPSTLST. Asp334, Asp345, Glu541, and Glu563 together coordinate Mn(2+).

This sequence belongs to the peptidase M24B family. Mn(2+) is required as a cofactor.

The enzyme catalyses Release of any N-terminal amino acid, including proline, that is linked to proline, even from a dipeptide or tripeptide.. Catalyzes the removal of a penultimate prolyl residue from the N-termini of peptides. This is Probable Xaa-Pro aminopeptidase CHGG_02942 from Chaetomium globosum (strain ATCC 6205 / CBS 148.51 / DSM 1962 / NBRC 6347 / NRRL 1970) (Soil fungus).